The primary structure comprises 954 residues: MTTPTEFQFTDYQPYDFANRRHIGPSPAEMTDMLKVIGYNSLDGLIDGTLPPAIRQKAPLVWGAPMTEREALDKLRETANKNKVLVSLIGQGYHGTITPPVIQRNILENPAWYTAYTPYQPEISQGRLEALLNYQTMVCDLTGLDVANASLLDEATAAAEGMAIAERVAKSKAKAFFVDADCHPQTIALIRTRAEPLGWQVIVGNPFTDLDPVDVFGAIFQYPGTHGHINDFTGLIARLHQAGAISIVAADILALTLLKSPGEMGADIAVGSSQRFGVPVGYGGPHAAYMAVKDAIKRSMPGRLVGVSVDARGNRAYRLSLQTREQHIRREKATSNICTAQVLLAVMASMYAVFHGPKGIKAIAQQVHQKAVLMAKGLEKLGYKVEPESFFDTITVDVGHMQGLILRAAVAEGVNLRKVGDTHIGMSLDERTRPATLEAVWRAFGGNFKIADFEPSYRLPKGLLRTSDYLTHPIFHMNRAESEMTRYIRRLSDRDLALDRSMIPLGSCTMKLNATAEMLPITWPEFSDIHPFVPADQALGYREMIDDLIEKLCAVTGYDAFSMQPNSGAQGEYAGLLTIRNFHIANGEGHRDVCLIPTSAHGTNPASAQMVGMKVVVVKVRENGDIDLDDFRAKAEEHAANLSCCMITYPSTHGVFEETVKEICDLVHANGGQVYLDGANMNAMVGLSRPGDIGSDVSHLNLHKTFCIPHGGGGPGMGPIGVKAHLAPHLPGHPETDGRPGAVSAAAFGSASILPISWSYCLMMGGEGLTQATKVAILNANYIATRLKGAYDVLYKSKTGRVAHECIIDTRPLVDSAGVTVDDVAKRLIDCGFHAPTMSWPVAGTLMIEPTESETKAELDRFCEAMLAIREEARAIEDGRMDKVNNPLKNAPHTVEDLVGEWDRPYSREQACFPPGAFRVDKYWSPVNRVDNVYGDRNLICTCPPVESYAEAAE.

Lys704 is modified (N6-(pyridoxal phosphate)lysine).

It belongs to the GcvP family. In terms of assembly, the glycine cleavage system is composed of four proteins: P, T, L and H. It depends on pyridoxal 5'-phosphate as a cofactor.

The enzyme catalyses N(6)-[(R)-lipoyl]-L-lysyl-[glycine-cleavage complex H protein] + glycine + H(+) = N(6)-[(R)-S(8)-aminomethyldihydrolipoyl]-L-lysyl-[glycine-cleavage complex H protein] + CO2. The glycine cleavage system catalyzes the degradation of glycine. The P protein binds the alpha-amino group of glycine through its pyridoxal phosphate cofactor; CO(2) is released and the remaining methylamine moiety is then transferred to the lipoamide cofactor of the H protein. In Rhizobium leguminosarum bv. trifolii (strain WSM2304), this protein is Glycine dehydrogenase (decarboxylating).